The primary structure comprises 311 residues: Probable manganese-dependent inorganic pyrophosphatase (311 aa).

6 residues coordinate Mn(2+): histidine 9, aspartate 13, aspartate 15, aspartate 77, histidine 99, and aspartate 151.

It belongs to the PPase class C family. It depends on Mn(2+) as a cofactor.

Its subcellular location is the cytoplasm. It carries out the reaction diphosphate + H2O = 2 phosphate + H(+). The sequence is that of Probable manganese-dependent inorganic pyrophosphatase from Streptococcus equi subsp. zooepidemicus (strain MGCS10565).